The following is a 524-amino-acid chain: MEKDQIQPRVLESVDTNSLSLLSSNTSSNMNSNTNNKLSIIASDISTGSVLSRPLTPPVVQDIENNSMLQWQFEKKEFIFDSNSTPSKQAKPLQRNSPYQGNSQSENQNQQLLNVRKRRSQLIGAKPKIPSKLYQSVSKLDLIDDKSFTSLPIAPPCNIETNEDDSGNNEYNNNKKRPRLNPVNELRVHNNKRNRYVSYGPSLDTKNYELTENTSQDIPPLVLVEDYIPYTQSKSTKKMVSISDLKSKLSKRRDNHIPLRVKNSYSEINKETNRNSFEPNSLTLIPHILRNTEENRDESNNPLDFIKEEIEISDISIPNSIENMVVNLVNIPSSNKSYDDLYLSELNVHSQLRKCVICEKALYEISSRLLNSGYYKEIVCEQCTVRYEEAAKIFENCEFESSMDESNLSSGTFSDLENSAEPFHLSTDVPKKINRHIEDNKIDLKKEISKKKDSFSKELIERLQLQLLENDKSIKHHFNKDAMGSKSMNWFLEARRKLKWKWRINGLLPHFLRNQNSDRLNFQP.

Positions 83-101 (NSTPSKQAKPLQRNSPYQG) are enriched in polar residues. Disordered stretches follow at residues 83-108 (NSTP…SENQ) and 155-179 (PPCN…KRPR).

The protein resides in the cytoplasm. This is an uncharacterized protein from Saccharomyces cerevisiae (strain ATCC 204508 / S288c) (Baker's yeast).